Here is a 523-residue protein sequence, read N- to C-terminus: Inosine-5'-monophosphate dehydrogenase 2 (523 aa).

2 consecutive CBS domains span residues phenylalanine 121 to valine 183 and methionine 184 to serine 240. Residues aspartate 278 to serine 280 and glycine 328 to glycine 330 each bind NAD(+). 2 residues coordinate K(+): glycine 330 and glycine 332. Serine 333 contacts IMP. Cysteine 335 provides a ligand contact to K(+). Catalysis depends on cysteine 335, which acts as the Thioimidate intermediate. IMP contacts are provided by residues aspartate 368–glycine 370, glycine 391–glycine 392, and tyrosine 415–glycine 419. Arginine 437 functions as the Proton acceptor in the catalytic mechanism. Position 449 (glutamine 449) interacts with IMP. Residues glutamate 508, glycine 509, and glycine 510 each contribute to the K(+) site.

This sequence belongs to the IMPDH/GMPR family. Homotetramer. Seems to be able to form heterotetramers composed from more than 1 of the 3 IMPDH gene products (IMD2-4). Requires K(+) as cofactor.

The protein resides in the cytoplasm. It carries out the reaction IMP + NAD(+) + H2O = XMP + NADH + H(+). It functions in the pathway purine metabolism; XMP biosynthesis via de novo pathway; XMP from IMP: step 1/1. Its activity is regulated as follows. Mycophenolic acid (MPA) is a non-competitive inhibitor that prevents formation of the closed enzyme conformation by binding to the same site as the amobile flap. In contrast, mizoribine monophosphate (MZP) is a competitive inhibitor that induces the closed conformation. MPA is a potent inhibitor of mammalian IMPDHs but a poor inhibitor of the bacterial enzymes. MZP is a more potent inhibitor of bacterial IMPDH. Catalyzes the conversion of inosine 5'-phosphate (IMP) to xanthosine 5'-phosphate (XMP), the first committed and rate-limiting step in the de novo synthesis of guanine nucleotides, and therefore plays an important role in the regulation of cell growth. In contrast to the other IMPDH alleles IMD3 and IMD4, the enzymatic activity of IMD2 seems to be intrinsically drug resistant. The sequence is that of Inosine-5'-monophosphate dehydrogenase 2 from Saccharomyces cerevisiae (strain ATCC 204508 / S288c) (Baker's yeast).